Reading from the N-terminus, the 175-residue chain is UPF0398 protein SGO_0588 (175 aa).

The protein belongs to the UPF0398 family.

The chain is UPF0398 protein SGO_0588 from Streptococcus gordonii (strain Challis / ATCC 35105 / BCRC 15272 / CH1 / DL1 / V288).